Reading from the N-terminus, the 251-residue chain is Alanyl-tRNA editing protein AlaX-M (251 aa).

Zn(2+)-binding residues include His107, His111, Cys210, and His214.

This sequence belongs to the class-II aminoacyl-tRNA synthetase family. Editing domain AlaX-M subfamily. The cofactor is Zn(2+).

The protein localises to the cytoplasm. Its function is as follows. Functions in trans to edit the amino acid moiety from mischarged Ser-tRNA(Ala). Recognition depends, at least in part, on the acceptor stem of tRNA(Ala). The sequence is that of Alanyl-tRNA editing protein AlaX-M (alaXM) from Methanosarcina mazei (strain ATCC BAA-159 / DSM 3647 / Goe1 / Go1 / JCM 11833 / OCM 88) (Methanosarcina frisia).